The primary structure comprises 249 residues: Undecaprenyl-diphosphatase (249 aa).

Helical transmembrane passes span 11-31 (GLTE…TAIF), 35-55 (PDVG…LIFV), 80-100 (LVLS…FIES), 101-121 (VFSS…LMLL), 135-155 (IPYF…LPGI), 180-200 (FLMS…NVAF), 202-222 (TEQI…LYLV), and 226-246 (VIGG…FFVL).

Belongs to the UppP family.

Its subcellular location is the cell membrane. It catalyses the reaction di-trans,octa-cis-undecaprenyl diphosphate + H2O = di-trans,octa-cis-undecaprenyl phosphate + phosphate + H(+). Its function is as follows. Catalyzes the dephosphorylation of undecaprenyl diphosphate (UPP). The sequence is that of Undecaprenyl-diphosphatase from Methanococcus maripaludis (strain C7 / ATCC BAA-1331).